The sequence spans 225 residues: tRNA (guanine-N(7)-)-methyltransferase (225 aa).

S-adenosyl-L-methionine contacts are provided by Glu56, Glu81, Asp108, and Asp131. Asp131 is an active-site residue. Substrate is bound by residues Lys135, Asp167, and 204–207; that span reads TKFE.

The protein belongs to the class I-like SAM-binding methyltransferase superfamily. TrmB family.

The enzyme catalyses guanosine(46) in tRNA + S-adenosyl-L-methionine = N(7)-methylguanosine(46) in tRNA + S-adenosyl-L-homocysteine. It functions in the pathway tRNA modification; N(7)-methylguanine-tRNA biosynthesis. Its function is as follows. Catalyzes the formation of N(7)-methylguanine at position 46 (m7G46) in tRNA. In Legionella pneumophila (strain Corby), this protein is tRNA (guanine-N(7)-)-methyltransferase.